The sequence spans 769 residues: EEEVVISINSLGQLYFEHLQILHKQRAAKENEEEASVDTSQENQEDLGLWEEKFGKFVDIKANGPSSIGLDFSLHGFEHLYGIPQHAESHQLKNTGDEDAYRLYNLDVYGYQIYDKMGIYGSVPYLLAHKLGRTIGIFWLNASETLVEINTEPAVEYTLSQMGPVAAKQKVRSRTHVHWMSESGIIDVFLLTGPTPSDVFKQYSHLTGTQAMPPLFSLGYHQCRWNYEDEQDVKAVDAGFDEHDIPYDAMWLDIEHTEGKRYFTWDKKRFPNPERMQELLRSKKRKLVVISDPHIKIDPDYSVYVKAKDQGFFVKNQEGEDFEGVCWPGLSSYLDFTNPKVREWYSSLFAFPVYQGSTDILFLWNDMNEPSVFRRPEQTMQKNAIHHGNWEHRELHNIYGFYHQMATAEGLIQRSGGKERPFVLTRSFFAGSQKYGAVWTGDNTAEWSYLKISIPMLLTLSITGISFCGADIGGFIGNPETELLVRWYQAGAYQPFFRGHATMNAKRREPWLFGKEHTRLIREAIRERYGLLPYWYSLFYHAHVASQPVMRPLWVEFPDELKTFDMEDEYMLGSALLVHPVTEPKATTVDVFLPGSNEVWYDYKTFAHWEGGCTVKIPVALDTIPVFQRGGSVVPIKTTVGKSTGWMTESSYGLRVALSTKGSSVGELYLDDGHSFQYLHQKQFLHRKFSFCSSVLINSSADQRGHYPSKCVVEQILVLGLRKEPSFVTTHSSDGKDQPVAFTYCAKTSSLSLEKLSLNIATDWEVRII.

Asp-366 acts as the Nucleophile in catalysis. Glu-369 is an active-site residue. Asp-442 serves as the catalytic Proton donor.

This sequence belongs to the glycosyl hydrolase 31 family.

It catalyses the reaction Hydrolysis of terminal, non-reducing (1-&gt;4)-linked alpha-D-glucose residues with release of alpha-D-glucose.. Its function is as follows. Has alpha-glucosidase activity. The polypeptide is Neutral alpha-glucosidase C (GANC) (Macaca fascicularis (Crab-eating macaque)).